The following is a 180-amino-acid chain: NADH-quinone oxidoreductase subunit I (180 aa).

4Fe-4S ferredoxin-type domains are found at residues 44-74 (LNRY…VEGA) and 90-119 (RVYQ…MTTE). Positions 54, 57, 60, 64, 99, 102, 105, and 109 each coordinate [4Fe-4S] cluster. Residues 145–180 (MQAPPHDMAPGKTDDDYYLGNVTPITPVPSGTEDAR) are disordered.

Belongs to the complex I 23 kDa subunit family. In terms of assembly, NDH-1 is composed of 14 different subunits. Subunits NuoA, H, J, K, L, M, N constitute the membrane sector of the complex. It depends on [4Fe-4S] cluster as a cofactor.

It is found in the cell membrane. It carries out the reaction a quinone + NADH + 5 H(+)(in) = a quinol + NAD(+) + 4 H(+)(out). In terms of biological role, NDH-1 shuttles electrons from NADH, via FMN and iron-sulfur (Fe-S) centers, to quinones in the respiratory chain. The immediate electron acceptor for the enzyme in this species is believed to be menaquinone. Couples the redox reaction to proton translocation (for every two electrons transferred, four hydrogen ions are translocated across the cytoplasmic membrane), and thus conserves the redox energy in a proton gradient. The protein is NADH-quinone oxidoreductase subunit I of Mycolicibacterium smegmatis (strain ATCC 700084 / mc(2)155) (Mycobacterium smegmatis).